Reading from the N-terminus, the 132-residue chain is Phycocyanin PC645 alpha-1 subunit (132 aa).

(2R,3E)-phycocyanobilin is bound by residues aspartate 54 and arginine 68. The mesobiliverdin site is built by cysteine 70, glutamine 76, tyrosine 77, and lysine 92. 15,16-dihydrobiliverdin contacts are provided by proline 123 and isoleucine 125.

It belongs to the phycoerythrin family. In terms of assembly, heterotetramer of 2 different alpha chains and 2 identical beta chains which form 2 alpha-beta heterodimers within the heterotetramer. Contains two phycocyanobilin chromophores, one mesobiliverdin chromophore and one 15,16-dihydrobiliverdin chromophore with binding mediated by both the alpha and beta subunits.

It localises to the plastid. The protein resides in the chloroplast thylakoid membrane. Functionally, light-harvesting photosynthetic tetrapyrrole chromophore-protein from the phycobiliprotein complex. This chain is Phycocyanin PC645 alpha-1 subunit, found in Chroomonas sp. (strain CCMP270).